The chain runs to 137 residues: Cucumber peeling cupredoxin (137 aa).

Position 1 is a pyrrolidone carboxylic acid (Gln-1). One can recognise a Phytocyanin domain in the interval 3–107 (TVHIVGDNTG…GQKLSINVVA (105 aa)). Cu cation contacts are provided by His-46, Cys-89, His-94, and Gln-99. Residues Cys-60 and Cys-95 are joined by a disulfide bond. Residue Asn-109 is glycosylated (N-linked (GlcNAc...) asparagine). The disordered stretch occupies residues 112 to 137 (VSMPPPSSSPPSSVMPPPVMPPPSPS). Over residues 114–137 (MPPPSSSPPSSVMPPPVMPPPSPS) the composition is skewed to pro residues. Pro-115 is subject to 4-hydroxyproline; partial. 4-hydroxyproline occurs at positions 116, 117, 121, and 122. Position 127 is a 4-hydroxyproline; partial (Pro-127). Residues Pro-128, Pro-129, Pro-133, Pro-134, and Pro-136 each carry the 4-hydroxyproline modification.

This Cucumis sativus (Cucumber) protein is Cucumber peeling cupredoxin.